Here is a 265-residue protein sequence, read N- to C-terminus: Cytochrome c oxidase subunit 3 (265 aa).

The next 6 membrane-spanning stretches (helical) occupy residues 16–36 (PWPFFVAISANGMAVGLILWL), 40–60 (PSFLLMGMSLVCMLLSTFSWW), 83–103 (CVALFILSEVMFFFTFFWTFF), 159–179 (VGPFIGLVVTIVCGTVFFLVQ), 198–218 (VFYLLTGFHGMHVVVGTIWLM), and 241–261 (IWYWHFVDVVWVALWCLVYVW).

It belongs to the cytochrome c oxidase subunit 3 family. Component of the cytochrome c oxidase (complex IV, CIV), a multisubunit enzyme composed of a catalytic core of 3 subunits and several supernumerary subunits. The complex exists as a monomer or a dimer and forms supercomplexes (SCs) in the inner mitochondrial membrane with ubiquinol-cytochrome c oxidoreductase (cytochrome b-c1 complex, complex III, CIII).

The protein resides in the mitochondrion inner membrane. The catalysed reaction is 4 Fe(II)-[cytochrome c] + O2 + 8 H(+)(in) = 4 Fe(III)-[cytochrome c] + 2 H2O + 4 H(+)(out). Functionally, component of the cytochrome c oxidase, the last enzyme in the mitochondrial electron transport chain which drives oxidative phosphorylation. The respiratory chain contains 3 multisubunit complexes succinate dehydrogenase (complex II, CII), ubiquinol-cytochrome c oxidoreductase (cytochrome b-c1 complex, complex III, CIII) and cytochrome c oxidase (complex IV, CIV), that cooperate to transfer electrons derived from NADH and succinate to molecular oxygen, creating an electrochemical gradient over the inner membrane that drives transmembrane transport and the ATP synthase. Cytochrome c oxidase is the component of the respiratory chain that catalyzes the reduction of oxygen to water. Electrons originating from reduced cytochrome c in the intermembrane space (IMS) are transferred via the dinuclear copper A center (CU(A)) of subunit 2 and heme A of subunit 1 to the active site in subunit 1, a binuclear center (BNC) formed by heme A3 and copper B (CU(B)). The BNC reduces molecular oxygen to 2 water molecules using 4 electrons from cytochrome c in the IMS and 4 protons from the mitochondrial matrix. The polypeptide is Cytochrome c oxidase subunit 3 (COIII) (Mytilus edulis (Blue mussel)).